Here is a 142-residue protein sequence, read N- to C-terminus: Hemoglobin subunit alpha-A (142 aa).

Residues 2 to 142 enclose the Globin domain; the sequence is VLSANDKTNV…VGNVLTAKYR (141 aa). Histidine 59 contacts O2. A heme b-binding site is contributed by histidine 88.

It belongs to the globin family. In terms of assembly, heterotetramer of two alpha chains and two beta chains. As to expression, red blood cells.

Functionally, involved in oxygen transport from the lung to the various peripheral tissues. In Accipiter gentilis (Northern goshawk), this protein is Hemoglobin subunit alpha-A (HBAA).